A 1433-amino-acid chain; its full sequence is DNA-directed RNA polymerase subunit beta' (1433 aa).

Residues C60, C62, C75, and C78 each contribute to the Zn(2+) site. Mg(2+) is bound by residues D449, D451, and D453. Residues C777, C851, C858, and C861 each coordinate Zn(2+). Composition is skewed to acidic residues over residues 1383–1393 (DSEEEEEELSE) and 1411–1433 (EEDE…DDDD). Positions 1383–1433 (DSEEEEEELSELSEAAPVSTATLSKLVAEEDEDEDELEEEADDSDDEDDDD) are disordered.

The protein belongs to the RNA polymerase beta' chain family. In terms of assembly, the RNAP catalytic core consists of 2 alpha, 1 beta, 1 beta' and 1 omega subunit. When a sigma factor is associated with the core the holoenzyme is formed, which can initiate transcription. Requires Mg(2+) as cofactor. Zn(2+) is required as a cofactor.

It catalyses the reaction RNA(n) + a ribonucleoside 5'-triphosphate = RNA(n+1) + diphosphate. Functionally, DNA-dependent RNA polymerase catalyzes the transcription of DNA into RNA using the four ribonucleoside triphosphates as substrates. The chain is DNA-directed RNA polymerase subunit beta' from Leptospira biflexa serovar Patoc (strain Patoc 1 / Ames).